A 360-amino-acid chain; its full sequence is Outer membrane protein P2 (360 aa).

A signal peptide spans Met-1–Ala-20.

It belongs to the Gram-negative porin family. In terms of assembly, homotrimer.

Its subcellular location is the cell outer membrane. Forms pores that allow passive diffusion of small molecules across the outer membrane. The polypeptide is Outer membrane protein P2 (ompP2) (Haemophilus influenzae).